Here is a 1756-residue protein sequence, read N- to C-terminus: MESQQLSNYPHISHGSACASVTSKEVHTNQDPLDVSASKIQEYDKASTKANSQQTTTPASSAVPENPHHASPQPASVPPPQNGPYPQQCMMTQNQANPSGWSFYGHPSMIPYTPYQMSPMYFPPGPQSQFPQYPSSVGTPLSTPSPESGNTFTDSSSADSDMTSTKKYVRPPPMLTSPNDFPNWVKTYIKFLQNSNLGGIIPTVNGKPVRPITDDELTFLYNTFQIFAPSQFLPTWVKDILSVDYTDIMKILSKSIEKMQSDTQEANDIVTLANLQYNGSTPADAFETKVTNIIDRLNNNGIHINNKVACQLIMRGLSGEYKFLRYTRHRHLNMTVAELFLDIHAIYEEQQGSRNSKPNYRRNPSDEKNDSRSYTNTTKPKVIARNPQKTNNSKSKTARAHNVSTSNNSPSTDNDSISKSTTEPIQLNNKHDLHLGQKLTESTVNHTNHSDDELPGHLLLDSGASRTLIRSAHHIHSASSNPDINVVDAQKRNIPINAIGDLQFHFQDNTKTSIKVLHTPNIAYDLLSLNELAAVDITACFTKNVLERSDGTVLAPIVKYGDFYWVSKKYLLPSNISVPTINNVHTSESTRKYPYPFIHRMLAHANAQTIRYSLKNNTITYFNESDVDWSSAIDYQCPDCLIGKSTKHRHIKGSRLKYQNSYEPFQYLHTDIFGPVHNLPKSAPSYFISFTDETTKFRWVYPLHDRREDSILDVFTTILAFIKNQFQASVLVIQMDRGSEYTNRTLHKFLEKKNGITPCYTTTADSRAHGVAERLNRTLLDDCRTQLQCSGLPNHLWFSAIEFSTIVRNSLASPKSKKSARQHAGLAGLDISTLLPFGQPVIVNDHNPNSKIHPRGIPGYALHPSRNSYGYIIYLPSLKKTVDTTNYVILQGKESRLDQFNYDALTFDEDLNRLTASYHSFIASNEIQESNDLNIESDHDFQSDIELHPEQPRNVLSKAVSPTDSTPPSTHTEDSKRVSKTNIRAPREVDPNISESNILPSKKRSSTPQISNIESTGSGGMHKLNVPLLAPMSQSNTHESSHASKSKDFRHSDSYSENETNHTNVPISSTGGTNNKTVPQISDQETEKRIIHRSPSIDASPPENNSSHNIVPIKTPTTVSEQNTEESIIADLPLPDLPPESPTEFPDPFKELPPINSHQTNSSLGGIGDSNAYTTINSKKRSLEDNETEIKVSRDTWNTKNMRSLEPPRSKKRIHLIAAVKAVKSIKPIRTTLRYDEAITYNKDIKEKEKYIEAYHKEVNQLLKMNTWDTDKYYDRKEIDPKRVINSMFIFNRKRDGTHKARFVARGDIQHPDTYDSGMQSNTVHHYALMTSLSLALDNNYYITQLDISSAYLYADIKEELYIRPPPHLGMNDKLIRLKKSLYGLKQSGANWYETIKSYLIKQCGMEEVRGWSCVFKNSQVTICLFVDDMILFSKDLNANKKIITTLKKQYDTKIINLGESDNEIQYDILGLEIKYQRGKYMKLGMENSLTEKIPKLNVPLNPKGRKLSAPGQPGLYIDQDELEIDEDEYKEKVHEMQKLIGLASYVGYKFRFDLLYYINTLAQHILFPSRQVLDMTYELIQFMWDTRDKQLIWHKNKPTEPDNKLVAISDASYGNQPYYKSQIGNIYLLNGKVIGGKSTKASLTCTSTTEAEIHAISESVPLLNNLSHLVQELNKKPITKGLLTDSKSTISIIISNNEEKFRNRFFGTKAMRLRDEVSGNHLHVCYIETKKNIADVMTKPLPIKTFKLLTNKWIH.

3 stretches are compositionally biased toward polar residues: residues 1-10, 48-60, and 127-152; these read MESQQLSNYP, TKANSQQTTTPAS, and QSQFPQYPSSVGTPLSTPSPESGNTF. 3 disordered regions span residues 1–93, 126–173, and 352–421; these read MESQ…MMTQ, PQSQ…RPPP, and GSRN…SKST. Residues 153-165 show a composition bias toward low complexity; the sequence is TDSSSADSDMTST. Positions 299-401 are RNA-binding; it reads NNGIHINNKV…NSKSKTARAH (103 aa). A compositionally biased stretch (low complexity) spans 402–418; that stretch reads NVSTSNNSPSTDNDSIS. D461 (for protease activity; shared with dimeric partner) is an active-site residue. Positions 583–640 are integrase-type zinc finger-like; the sequence is NVHTSESTRKYPYPFIHRMLAHANAQTIRYSLKNNTITYFNESDVDWSSAIDYQCPDC. The 177-residue stretch at 660 to 836 folds into the Integrase catalytic domain; the sequence is NSYEPFQYLH…AGLDISTLLP (177 aa). Mg(2+) contacts are provided by D671 and D736. Disordered regions lie at residues 957 to 1088, 1093 to 1112, and 1131 to 1188; these read SKAV…ETEK, RSPSIDASPPENNSSHNIVP, and DLPL…DNET. The segment covering 961-970 has biased composition (low complexity); that stretch reads SPTDSTPPST. Over residues 1006–1016 the composition is skewed to polar residues; it reads STPQISNIEST. Residues 1039–1054 are compositionally biased toward basic and acidic residues; it reads ESSHASKSKDFRHSDS. Composition is skewed to polar residues over residues 1055–1083 and 1102–1112; these read YSENETNHTNVPISSTGGTNNKTVPQISD and PENNSSHNIVP. Residues 1179–1213 carry the Bipartite nuclear localization signal motif; sequence KKRSLEDNETEIKVSRDTWNTKNMRSLEPPRSKKR. The region spanning 1339–1477 is the Reverse transcriptase Ty1/copia-type domain; sequence NNYYITQLDI…DILGLEIKYQ (139 aa). Residues D1347, D1428, D1429, D1611, E1653, and D1686 each contribute to the Mg(2+) site. The RNase H Ty1/copia-type domain maps to 1611 to 1753; the sequence is DASYGNQPYY…IKTFKLLTNK (143 aa).

As to quaternary structure, the capsid protein forms a homotrimer, from which the VLPs are assembled. The protease is a homodimer, whose active site consists of two apposed aspartic acid residues. Initially, virus-like particles (VLPs) are composed of the structural unprocessed proteins Gag and Gag-Pol, and also contain the host initiator methionine tRNA (tRNA(i)-Met) which serves as a primer for minus-strand DNA synthesis, and a dimer of genomic Ty RNA. Processing of the polyproteins occurs within the particle and proceeds by an ordered pathway, called maturation. First, the protease (PR) is released by autocatalytic cleavage of the Gag-Pol polyprotein yielding capsid protein p45 and a Pol-p154 precursor protein. This cleavage is a prerequisite for subsequent processing of Pol-p154 at the remaining sites to release the mature structural and catalytic proteins. Maturation takes place prior to the RT reaction and is required to produce transposition-competent VLPs.

Its subcellular location is the cytoplasm. It localises to the nucleus. It catalyses the reaction DNA(n) + a 2'-deoxyribonucleoside 5'-triphosphate = DNA(n+1) + diphosphate. The enzyme catalyses Endonucleolytic cleavage to 5'-phosphomonoester.. In terms of biological role, capsid protein (CA) is the structural component of the virus-like particle (VLP), forming the shell that encapsulates the retrotransposons dimeric RNA genome. The particles are assembled from trimer-clustered units and there are holes in the capsid shells that allow for the diffusion of macromolecules. CA also has nucleocapsid-like chaperone activity, promoting primer tRNA(i)-Met annealing to the multipartite primer-binding site (PBS), dimerization of Ty1 RNA and initiation of reverse transcription. The aspartyl protease (PR) mediates the proteolytic cleavages of the Gag and Gag-Pol polyproteins after assembly of the VLP. Its function is as follows. Reverse transcriptase/ribonuclease H (RT) is a multifunctional enzyme that catalyzes the conversion of the retro-elements RNA genome into dsDNA within the VLP. The enzyme displays a DNA polymerase activity that can copy either DNA or RNA templates, and a ribonuclease H (RNase H) activity that cleaves the RNA strand of RNA-DNA heteroduplexes during plus-strand synthesis and hydrolyzes RNA primers. The conversion leads to a linear dsDNA copy of the retrotransposon that includes long terminal repeats (LTRs) at both ends. Functionally, integrase (IN) targets the VLP to the nucleus, where a subparticle preintegration complex (PIC) containing at least integrase and the newly synthesized dsDNA copy of the retrotransposon must transit the nuclear membrane. Once in the nucleus, integrase performs the integration of the dsDNA into the host genome. The polypeptide is Transposon Ty1-PR2 Gag-Pol polyprotein (TY1B-PR2) (Saccharomyces cerevisiae (strain ATCC 204508 / S288c) (Baker's yeast)).